Here is a 686-residue protein sequence, read N- to C-terminus: Methionine--tRNA ligase (686 aa).

A 'HIGH' region motif is present at residues 15 to 25 (PYANGSIHLGH). Cysteine 146, cysteine 149, cysteine 159, and cysteine 162 together coordinate Zn(2+). Residues 332–336 (KMSKS) carry the 'KMSKS' region motif. Position 335 (lysine 335) interacts with ATP. The 102-residue stretch at 585–686 (AFAAVDMRIA…EGAQPGMRVM (102 aa)) folds into the tRNA-binding domain.

Belongs to the class-I aminoacyl-tRNA synthetase family. MetG type 1 subfamily. Homodimer. It depends on Zn(2+) as a cofactor.

The protein localises to the cytoplasm. The enzyme catalyses tRNA(Met) + L-methionine + ATP = L-methionyl-tRNA(Met) + AMP + diphosphate. Is required not only for elongation of protein synthesis but also for the initiation of all mRNA translation through initiator tRNA(fMet) aminoacylation. In Vibrio campbellii (strain ATCC BAA-1116), this protein is Methionine--tRNA ligase.